The primary structure comprises 273 residues: Undecaprenyl-diphosphatase (273 aa).

The next 8 membrane-spanning stretches (helical) occupy residues Ile4–Ile24, Phe45–Phe65, Thr84–Phe104, Phe112–Ile132, Ile149–Thr169, Tyr187–Leu207, Ala219–Ile239, and Phe251–Leu271.

This sequence belongs to the UppP family.

Its subcellular location is the cell membrane. The enzyme catalyses di-trans,octa-cis-undecaprenyl diphosphate + H2O = di-trans,octa-cis-undecaprenyl phosphate + phosphate + H(+). In terms of biological role, catalyzes the dephosphorylation of undecaprenyl diphosphate (UPP). Confers resistance to bacitracin. In Lachnoclostridium phytofermentans (strain ATCC 700394 / DSM 18823 / ISDg) (Clostridium phytofermentans), this protein is Undecaprenyl-diphosphatase.